The chain runs to 3515 residues: Microtubule-actin cross-linking factor 1, isoforms 6/7 (3515 aa).

Disordered stretches follow at residues 1–23 (MGKP…KGEE), 108–136 (VQKS…WKSF), 155–196 (VSEA…TLEH), 965–1178 (TEED…AVPT), 1217–1298 (SPAA…SPAA), 1710–1730 (EELA…QFQQ), and 3078–3108 (PTHA…ILSQ). Residues 120–129 (PNAERKDNVN) are compositionally biased toward basic and acidic residues. Residues 157–245 (EAGASNPSLQ…ESEAVATSGN (89 aa)) are 13 X 13 AA approximate tandem repeat of P-T-S-P-A-A-A-V-P-T-P-E-E. Low complexity-rich tracts occupy residues 995–1031 (STPE…SPAA) and 1040–1139 (TSPA…AVPT). 13 repeat units span residues 1012–1024 (EPTS…PTPE), 1026–1037 (PTSPAAAVPPPE), 1038–1051 (EPTS…TPEE), 1052–1064 (PTSP…TPEE), 1065–1077 (PTSP…TPEE), 1078–1090 (PTSP…TPEE), 1091–1103 (PTSP…TPEE), 1104–1116 (PTSP…TPEE), 1117–1129 (PASP…TPEE), 1130–1142 (PASP…TPEE), 1143–1155 (PAFP…TPEE), 1156–1168 (SASA…TPEE), and 1169–1178 (SASPAAAVPT). Positions 1140 to 1151 (PEEPAFPAPAVP) are enriched in pro residues. Low complexity-rich tracts occupy residues 1162–1178 (AVPT…AVPT) and 1268–1298 (SSPA…SPAA). Residues 1715–1730 (SGGQSPTGEQIPQFQQ) show a composition bias toward polar residues. 2 EF-hand domains span residues 3168-3203 (HKKS…SKFP) and 3204-3239 (TTKL…NKDA). 10 residues coordinate Ca(2+): Asp-3181, Asp-3183, Asp-3185, Lys-3187, Glu-3192, Asp-3217, Asp-3219, Asp-3221, Tyr-3223, and Glu-3228. Positions 3244-3316 (TDADKIEDEV…EFLVKNDPCR (73 aa)) constitute a GAR domain. The disordered stretch occupies residues 3332–3515 (PEGASQGMTP…ASPRTPGPKR (184 aa)). Positions 3352–3386 (SSRAASPTRSSSSASQSNHSCTSMPSSPATPASGT) are enriched in low complexity. The segment covering 3402–3426 (TFHSSRTSLAGDTSNSSSPASTGAK) has biased composition (polar residues). Residues 3437 to 3451 (SRPGSRAGSRAGSRA) are compositionally biased toward low complexity. Residues 3466–3488 (ETQSACSDTSESSAAGGQGNSRR) show a composition bias toward polar residues.

The protein resides in the cytoplasm. It localises to the cytoskeleton. The chain is Microtubule-actin cross-linking factor 1, isoforms 6/7 from Homo sapiens (Human).